Here is a 227-residue protein sequence, read N- to C-terminus: Cytochrome c oxidase subunit 2 (227 aa).

At 1–14 the chain is on the mitochondrial intermembrane side; the sequence is MAHPVQLSLQDATS. A helical transmembrane segment spans residues 15–45; sequence PIMEELITFHDHAFMAMSLISFLVLYALALT. Over 46 to 59 the chain is Mitochondrial matrix; sequence LTTKLTNTNITDAQ. The helical transmembrane segment at 60-87 threads the bilayer; that stretch reads EMETIWTILPAVILILIALPSLRVLYLT. Topologically, residues 88-227 are mitochondrial intermembrane; the sequence is DEVNDPSLTI…IFEMGPVFTL (140 aa). Residues His161, Cys196, Glu198, Cys200, His204, and Met207 each coordinate Cu cation. Glu198 serves as a coordination point for Mg(2+).

The protein belongs to the cytochrome c oxidase subunit 2 family. Component of the cytochrome c oxidase (complex IV, CIV), a multisubunit enzyme composed of 14 subunits. The complex is composed of a catalytic core of 3 subunits MT-CO1, MT-CO2 and MT-CO3, encoded in the mitochondrial DNA, and 11 supernumerary subunits COX4I, COX5A, COX5B, COX6A, COX6B, COX6C, COX7A, COX7B, COX7C, COX8 and NDUFA4, which are encoded in the nuclear genome. The complex exists as a monomer or a dimer and forms supercomplexes (SCs) in the inner mitochondrial membrane with NADH-ubiquinone oxidoreductase (complex I, CI) and ubiquinol-cytochrome c oxidoreductase (cytochrome b-c1 complex, complex III, CIII), resulting in different assemblies (supercomplex SCI(1)III(2)IV(1) and megacomplex MCI(2)III(2)IV(2)). Found in a complex with TMEM177, COA6, COX18, COX20, SCO1 and SCO2. Interacts with TMEM177 in a COX20-dependent manner. Interacts with COX20. Interacts with COX16. The cofactor is Cu cation.

It is found in the mitochondrion inner membrane. The catalysed reaction is 4 Fe(II)-[cytochrome c] + O2 + 8 H(+)(in) = 4 Fe(III)-[cytochrome c] + 2 H2O + 4 H(+)(out). Its function is as follows. Component of the cytochrome c oxidase, the last enzyme in the mitochondrial electron transport chain which drives oxidative phosphorylation. The respiratory chain contains 3 multisubunit complexes succinate dehydrogenase (complex II, CII), ubiquinol-cytochrome c oxidoreductase (cytochrome b-c1 complex, complex III, CIII) and cytochrome c oxidase (complex IV, CIV), that cooperate to transfer electrons derived from NADH and succinate to molecular oxygen, creating an electrochemical gradient over the inner membrane that drives transmembrane transport and the ATP synthase. Cytochrome c oxidase is the component of the respiratory chain that catalyzes the reduction of oxygen to water. Electrons originating from reduced cytochrome c in the intermembrane space (IMS) are transferred via the dinuclear copper A center (CU(A)) of subunit 2 and heme A of subunit 1 to the active site in subunit 1, a binuclear center (BNC) formed by heme A3 and copper B (CU(B)). The BNC reduces molecular oxygen to 2 water molecules using 4 electrons from cytochrome c in the IMS and 4 protons from the mitochondrial matrix. The polypeptide is Cytochrome c oxidase subunit 2 (MT-CO2) (Macaca fascicularis (Crab-eating macaque)).